The chain runs to 71 residues: Protein translocase subunit SecE (71 aa).

Residues 43–63 (VAGAGILAVGAVGFIIYVLLT) traverse the membrane as a helical segment.

Belongs to the SecE/SEC61-gamma family. As to quaternary structure, component of the Sec protein translocase complex. Heterotrimer consisting of SecY (alpha), SecG (beta) and SecE (gamma) subunits. The heterotrimers can form oligomers, although 1 heterotrimer is thought to be able to translocate proteins. Interacts with the ribosome. May interact with SecDF, and other proteins may be involved.

It is found in the cell membrane. Its function is as follows. Essential subunit of the Sec protein translocation channel SecYEG. Clamps together the 2 halves of SecY. May contact the channel plug during translocation. In Methanosarcina mazei (strain ATCC BAA-159 / DSM 3647 / Goe1 / Go1 / JCM 11833 / OCM 88) (Methanosarcina frisia), this protein is Protein translocase subunit SecE.